Here is a 701-residue protein sequence, read N- to C-terminus: MRPVTDIQRTDRPFEVVTDMVPAGDQPAAIEELARRIQGGAADTVLLGATGTGKTATVAWLIERLQRPTLVIQPNKTLAAQFANELREMMPHNAVEYFVSYYDYYQPEAYVPQTDTYIEKDSSINEEVERLRHSATTALLTRRDTVVVASVSCIYGLGTPQEYVDRMATVEVGMEIDRDELLRRLVEMQYTRNDVAFTRGTFRVRGDTVEIIPVYDELAVRIEMFGDEIERLMTLHPITGEVLGESDRVYIFPASHYVAGPERMRKAIAGIQAELEERLAELEAAGKLLEAQRLRMRTTYDVEMLEQMGTCAGVENYSRHFDGRAPGSPPNTLLDYFPEDFLVVIDESHVTVPQIGGMYEGDAARKRTLVEHGFRLPSAMDNRPLTWDEFRERTGQTLYLSATPGPYELERVGGDVVEQVIRPTGLVDPEVIVKPTEGQIDDLVHEIRIRAERDERVLVTTLTKKMAEDLTDYLTDLGIRVRYLHSEIDTLRRVELLRELRVGVFDVLVGINLLREGLDLPEVSLVAILDADKEGFLRSERSLIQTIGRAARHVSGQVHMYADTVTDAMAAAIEETNRRRAKQLAYNAEHGIDPKPLRKKIADILDSLAREDADTAELLARSRGEKRGTPTPRSGALSGPDRVAEQAKNLPREELAALVEQLTEQMHQAAADLQFELAARLRDEIKELKRELRGMEEAGIG.

The Helicase ATP-binding domain maps to 35 to 422 (RRIQGGAADT…GGDVVEQVIR (388 aa)). 48-55 (GATGTGKT) is an ATP binding site. Positions 101 to 124 (YYDYYQPEAYVPQTDTYIEKDSSI) match the Beta-hairpin motif. Residues 439–605 (QIDDLVHEIR…PLRKKIADIL (167 aa)) form the Helicase C-terminal domain. A disordered region spans residues 620-648 (ARSRGEKRGTPTPRSGALSGPDRVAEQAK). A UVR domain is found at 656–691 (AALVEQLTEQMHQAAADLQFELAARLRDEIKELKRE).

The protein belongs to the UvrB family. As to quaternary structure, forms a heterotetramer with UvrA during the search for lesions. Interacts with UvrC in an incision complex.

It localises to the cytoplasm. Its function is as follows. The UvrABC repair system catalyzes the recognition and processing of DNA lesions. A damage recognition complex composed of 2 UvrA and 2 UvrB subunits scans DNA for abnormalities. Upon binding of the UvrA(2)B(2) complex to a putative damaged site, the DNA wraps around one UvrB monomer. DNA wrap is dependent on ATP binding by UvrB and probably causes local melting of the DNA helix, facilitating insertion of UvrB beta-hairpin between the DNA strands. Then UvrB probes one DNA strand for the presence of a lesion. If a lesion is found the UvrA subunits dissociate and the UvrB-DNA preincision complex is formed. This complex is subsequently bound by UvrC and the second UvrB is released. If no lesion is found, the DNA wraps around the other UvrB subunit that will check the other stand for damage. The protein is UvrABC system protein B of Thermobifida fusca (strain YX).